The primary structure comprises 78 residues: MLTYHYTLRSSAYRLLALFQVDLRISTLHFAGVLIMDNKKDNISEEEKLPKEKEIGGVKGLEPTRYGDWQHKGKVTDF.

The protein belongs to the SDHAF4 family.

This chain is UPF0369 protein RF_1112, found in Rickettsia felis (strain ATCC VR-1525 / URRWXCal2) (Rickettsia azadi).